Consider the following 644-residue polypeptide: Exoribonuclease 2 (644 aa).

Residues 189–516 (REDLTALDFV…NHRLLKAVIK (328 aa)) enclose the RNB domain. The region spanning 561 to 643 (DTRFAAEIVD…ETRSIIARPV (83 aa)) is the S1 motif domain.

It belongs to the RNR ribonuclease family. RNase II subfamily.

The protein resides in the cytoplasm. It catalyses the reaction Exonucleolytic cleavage in the 3'- to 5'-direction to yield nucleoside 5'-phosphates.. Involved in mRNA degradation. Hydrolyzes single-stranded polyribonucleotides processively in the 3' to 5' direction. The sequence is that of Exoribonuclease 2 from Escherichia coli (strain SMS-3-5 / SECEC).